Reading from the N-terminus, the 70-residue chain is Protein SlyX homolog (70 aa).

It belongs to the SlyX family.

In Shewanella oneidensis (strain ATCC 700550 / JCM 31522 / CIP 106686 / LMG 19005 / NCIMB 14063 / MR-1), this protein is Protein SlyX homolog.